We begin with the raw amino-acid sequence, 568 residues long: MRVTRFPLSTTRETPADAEIVSHQLMLRAGMIRRLSSGLYTWLPLGLRVLQKVERIVREEMNRAGALEVLMPAVQPAELWQESGRWEKYGPELLRIRDRHDREGCFGPTHEEVITDLFRREIRSYRQLPVNYYQIQTKFRDEIRPRFGVMRAREFLMKDAYSFHLDDDDLRAEYQRMHEAYCRIFQRTGLAFRPVEADTGAIGGSVSHEFMVLADSGEDAIAVCEASGYAANVELAPAVAPTEPRPAPQAERAEVATPGQRTIAEVAAYLGLPEARNLKTLLVEGADGGLVALLLRGDHELNELKAEKHPAVKAPLTFAEAERVERQLGCPFGSLGPVGLTGVTLIADHAAAHLADFACGANREGYHLTGVNWGRDLPEPETADLREVTAGDPSPDGEGTLTLRRGIEVGHIFQLGTTYSEAMGASVLDEQGQERTVTMGCYGIGVSRVVAAAIEQNHDDRGICWPAPIAPFQVALVAIKAEDPAVAEAAEALYADLTASGIDVLYDDRDARPGVKFADMELIGIPHRVVVSPRAIQEGSVEYKGRQDADPTHVPRAEIVTWLKNRLT.

Belongs to the class-II aminoacyl-tRNA synthetase family. ProS type 1 subfamily. Homodimer.

It localises to the cytoplasm. The catalysed reaction is tRNA(Pro) + L-proline + ATP = L-prolyl-tRNA(Pro) + AMP + diphosphate. In terms of biological role, catalyzes the attachment of proline to tRNA(Pro) in a two-step reaction: proline is first activated by ATP to form Pro-AMP and then transferred to the acceptor end of tRNA(Pro). As ProRS can inadvertently accommodate and process non-cognate amino acids such as alanine and cysteine, to avoid such errors it has two additional distinct editing activities against alanine. One activity is designated as 'pretransfer' editing and involves the tRNA(Pro)-independent hydrolysis of activated Ala-AMP. The other activity is designated 'posttransfer' editing and involves deacylation of mischarged Ala-tRNA(Pro). The misacylated Cys-tRNA(Pro) is not edited by ProRS. In Halorhodospira halophila (strain DSM 244 / SL1) (Ectothiorhodospira halophila (strain DSM 244 / SL1)), this protein is Proline--tRNA ligase.